Reading from the N-terminus, the 887-residue chain is Phosphatidylinositol 3-kinase catalytic subunit type 3 (887 aa).

The C2 PI3K-type domain maps to 35–184 (YKAVLEDPML…LAKLTKAHRQ (150 aa)). A disordered region spans residues 149-170 (VEADGSEPTRTPGRTSSTLSED). Residues 156–170 (PTRTPGRTSSTLSED) show a composition bias toward polar residues. Phosphothreonine; by AMPK is present on Thr-163. At Ser-165 the chain carries Phosphoserine; by AMPK. Ser-244, Ser-261, and Ser-282 each carry phosphoserine. The 238-residue stretch at 283–520 (DHDLKPNATT…PKTHEMYLNV (238 aa)) folds into the PIK helical domain. The disordered stretch occupies residues 415 to 466 (LEPTKKDSQTSASESLSNSGVSSGDIDSSQIITNPLPPVASPPPASKAKEVS). The span at 425–437 (SASESLSNSGVSS) shows a compositional bias: low complexity. Residues 449-459 (PLPPVASPPPA) show a composition bias toward pro residues. One can recognise a PI3K/PI4K catalytic domain in the interval 605-871 (IPETATLFKS…LIDESVHALF (267 aa)). The interval 611-617 (LFKSALM) is G-loop. The catalytic loop stretch occupies residues 740–748 (GVGDRHLDN). Residues 759–780 (HIDFGYILGRDPKPLPPPMKLN) form an activation loop region.

It belongs to the PI3/PI4-kinase family. Component of the PI3K (PI3KC3/PI3K-III/class III phosphatidylinositol 3-kinase) complex the core of which is composed of the catalytic subunit PIK3C3, the regulatory subunit PIK3R4 and BECN1 associating with additional regulatory/auxiliary subunits to form alternative complex forms. Alternative complex forms containing a fourth regulatory subunit in a mutually exclusive manner are: the PI3K complex I (PI3KC3-C1) containing ATG14, and the PI3K complex II (PI3KC3-C2) containing UVRAG. PI3KC3-C1 displays a V-shaped architecture with PIK3R4 serving as a bridge between PIK3C3 and the ATG14:BECN1 subcomplex. Both, PI3KC3-C1 and PI3KC3-C2, can associate with further regulatory subunits such as RUBCN, SH3GLB1/Bif-1 and AMBRA1. PI3KC3-C1 probably associates with PIK3CB. Interacts with RAB7A in the presence of PIK3R4. Interacts with AMBRA1. Interacts with BECN1P1/BECN2. Interacts with SLAMF1. May be a component of a complex composed of RAB5A (in GDP-bound form), DYN2 and PIK3C3. Interacts with NCKAP1L. Interacts with ATG14; this interaction is increased in the absence of TMEM39A. Interacts with STEEP1; the interaction is STING1-dependent and required for trafficking of STING1 from the endoplasmic reticulum. Interacts with YWHAG. Interacts with ARMC3. Requires Mn(2+) as cofactor. Ubiquitinated via 'Lys-29'- and 'Lys-48'-linked ubiquitination by UBE3C, promoting its degradation. Deubiquitination by ZRANB1/TRABID promotes its stabilization, leading to autophagosome maturation.

Its subcellular location is the midbody. It localises to the late endosome. The protein localises to the cytoplasmic vesicle. The protein resides in the autophagosome. It carries out the reaction a 1,2-diacyl-sn-glycero-3-phospho-(1D-myo-inositol) + ATP = a 1,2-diacyl-sn-glycero-3-phospho-(1D-myo-inositol-3-phosphate) + ADP + H(+). In terms of biological role, catalytic subunit of the PI3K complex that mediates formation of phosphatidylinositol 3-phosphate; different complex forms are believed to play a role in multiple membrane trafficking pathways: PI3KC3-C1 is involved in initiation of autophagosomes and PI3KC3-C2 in maturation of autophagosomes and endocytosis. As part of PI3KC3-C1, promotes endoplasmic reticulum membrane curvature formation prior to vesicle budding. Involved in regulation of degradative endocytic trafficking and required for the abscission step in cytokinesis, probably in the context of PI3KC3-C2. Involved in the transport of lysosomal enzyme precursors to lysosomes. Required for transport from early to late endosomes. The protein is Phosphatidylinositol 3-kinase catalytic subunit type 3 of Mus musculus (Mouse).